A 231-amino-acid polypeptide reads, in one-letter code: Ion-translocating oxidoreductase complex subunit E (231 aa).

Helical transmembrane passes span 18–38, 39–59, 69–89, 93–113, 127–147, 157–177, and 182–202; these read GLVQLLGLCPLLAVTATITNA, LGLGVATLLVLIGSNVLVSLV, IPVFVMIIAALVTCVQLLINA, NLYLSLGIFLPLIVTNCVIIG, SAFDGLMMGLGFTAVLVVLGA, LFGGADLLLGDWASVLTIHVW, and PFLLAMLPPGAFIGMGLLIAL.

The protein belongs to the NqrDE/RnfAE family. As to quaternary structure, the complex is composed of six subunits: RnfA, RnfB, RnfC, RnfD, RnfE and RnfG.

It localises to the cell inner membrane. Its function is as follows. Part of a membrane-bound complex that couples electron transfer with translocation of ions across the membrane. This is Ion-translocating oxidoreductase complex subunit E from Shewanella frigidimarina (strain NCIMB 400).